Reading from the N-terminus, the 397-residue chain is MEIVGCRAEDSSCPFRPPAMLFHGISGGHIQGIMEEMERRSKSEARLAKGAQLNGRDAGMPPLSPEKPALCAGCGGKIADRYYLLAVDKQWHLRCLKCCECKLALESELTCFAKDGSIYCKEDYYRRFSVQRCARCHLGISASEMVMRARDSVYHLSCFTCSTCNKTLTTGDHFGMKDSLVYCRAHFETLLQGEYPPQLSYTELAAKSGGLALPYFNGTGTVQKGRPRKRKSPALGVDIVNYNSGCNENEADHLDRDQQPYPPSQKTKRMRTSFKHHQLRTMKSYFAINHNPDAKDLKQLAQKTGLTKRVLQVWFQNARAKFRRNLLRQENGGVDKADGTSLPAPPSADSGALSPPGTATTLTDLTNPSITVVTAVTSNMDSHESASPSQTTLTNLF.

2 consecutive LIM zinc-binding domains span residues 69 to 130 (ALCA…RFSV) and 131 to 193 (QRCA…LLQG). Disordered stretches follow at residues 248-272 (ENEA…RMRT) and 330-364 (ENGG…TLTD). Residues 267–326 (TKRMRTSFKHHQLRTMKSYFAINHNPDAKDLKQLAQKTGLTKRVLQVWFQNARAKFRRNL) constitute a DNA-binding region (homeobox).

As to quaternary structure, interacts with LDB1 and LDB2.

Its subcellular location is the nucleus. Functionally, involved in gonadal development. The chain is LIM/homeobox protein Lhx9 (LHX9) from Bos taurus (Bovine).